Reading from the N-terminus, the 86-residue chain is Large ribosomal subunit protein uL23c (86 aa).

It belongs to the universal ribosomal protein uL23 family. As to quaternary structure, part of the 50S ribosomal subunit.

It localises to the plastid. It is found in the chloroplast. Binds to 23S rRNA. This chain is Large ribosomal subunit protein uL23c (rpl23), found in Chlorella vulgaris (Green alga).